The primary structure comprises 102 residues: UPF0751 protein Dhaf_1351 (102 aa).

This sequence belongs to the UPF0751 family.

This Desulfitobacterium hafniense (strain DSM 10664 / DCB-2) protein is UPF0751 protein Dhaf_1351.